The sequence spans 91 residues: Gas vesicle protein K (91 aa).

Belongs to the gas vesicle GvpK family.

It localises to the gas vesicle. Functionally, might be involved in nucleating gas vesicle formation. Gas vesicles are hollow, gas filled proteinaceous nanostructures found in some microorganisms. It is not clear what function gas vesicles perform in soil bacteria. The protein is Gas vesicle protein K of Streptomyces sp. (strain CB03234).